The primary structure comprises 23 residues: Potassium channel toxin kappa-KTx 2.3 (23 aa).

2 disulfide bridges follow: C4–C22 and C8–C18.

Belongs to the short scorpion toxin superfamily. Potassium channel inhibitor kappa-KTx family. Kappa-KTx 2 subfamily. As to expression, expressed by the venom gland.

It localises to the secreted. Decreases the amplitude of the potassium current of the rat channels Kv1.1/KCNA1 by 33% and Kv1.2/KCNA2 by 8% as well as human Kv1.3/KCNA3 by 70%. The protein is Potassium channel toxin kappa-KTx 2.3 of Opisthacanthus madagascariensis (Scorpion).